We begin with the raw amino-acid sequence, 1735 residues long: Glutamine and serine-rich protein 1 (1735 aa).

Met1 carries the post-translational modification N-acetylmethionine. The segment covering 267-297 (AIPSSGYPPSTTKIKSCSTEQPLTSTKTPKP) has biased composition (polar residues). Disordered regions lie at residues 267 to 301 (AIPSSGYPPSTTKIKSCSTEQPLTSTKTPKPQSII), 414 to 440 (TRDLSSVSQSQSYSSGHSQGLSPVSQT), 479 to 518 (SRAQNLPDSSPTQNYISMHSSQNVQTQESSSPQSQKFLPA), and 533 to 561 (LQNNITSPDPKSYAERKLDSDVYPSSKQE). A compositionally biased stretch (low complexity) spans 417–440 (LSSVSQSQSYSSGHSQGLSPVSQT). Phosphoserine is present on residues Ser586, Ser615, and Ser886. Thr949 is subject to Phosphothreonine. Residues 964–1033 (GPSHEVQEQS…EFTLGGDDSG (70 aa)) are disordered. Residues 971–985 (EQSSGPFKKQSATNL) are compositionally biased toward polar residues. Residue Ser987 is modified to Phosphoserine. The span at 997–1024 (STLNNNRNQEFVSSSRSISGENATSESE) shows a compositional bias: polar residues. Glycyl lysine isopeptide (Lys-Gly) (interchain with G-Cter in SUMO2) cross-links involve residues Lys1058 and Lys1083. Disordered regions lie at residues 1073-1132 (KKRA…EKMR) and 1178-1217 (RPGTQMVRTFCPPPLPKPSSTTPTPLVSETGGNSPSDKVD). The segment covering 1120–1132 (SCHDGYQHQEKMR) has biased composition (basic and acidic residues). 4 positions are modified to phosphoserine: Ser1211, Ser1230, Ser1231, and Ser1239. A disordered region spans residues 1256–1286 (TSDKKKKTEALQVATTSPTANTTGTATTSST). The segment covering 1269-1286 (ATTSPTANTTGTATTSST) has biased composition (low complexity). The residue at position 1341 (Thr1341) is a Phosphothreonine. Ser1348 is subject to Phosphoserine. The disordered stretch occupies residues 1441 to 1532 (VCSKKPRNKP…SSDDEEFEPP (92 aa)). The span at 1449 to 1478 (KPSQTIRTVQAKPSSSSKTSDPLASKTTTT) shows a compositional bias: polar residues. The span at 1492–1508 (VKAEPPPKKRKKWKEEF) shows a compositional bias: basic and acidic residues.

Interacts with TET1.

The protein resides in the chromosome. Its function is as follows. Plays an essential role in the protection and maintenance of transcriptional and developmental programs. Protects many bivalent promoters and poised enhancers from hypermethylation, showing a marked preference for these regulatory elements over other types of promoters or enhancers. Mechanistically, cooperates with TET1 and binds to DNA in a common complex to inhibit the binding of DNMT3A/3B and therefore de novo methylation. The polypeptide is Glutamine and serine-rich protein 1 (QSER1) (Homo sapiens (Human)).